The chain runs to 372 residues: tRNA-specific 2-thiouridylase MnmA (372 aa).

ATP contacts are provided by residues Gly-16–Ser-23 and Met-42. The tract at residues Asn-102–Asp-104 is interaction with target base in tRNA. The active-site Nucleophile is Cys-107. Cys-107 and Cys-205 are joined by a disulfide. Gly-132 lines the ATP pocket. Residues Lys-155–Gln-157 are interaction with tRNA. Residue Cys-205 is the Cysteine persulfide intermediate of the active site. The interaction with tRNA stretch occupies residues Arg-317 to Tyr-318.

It belongs to the MnmA/TRMU family.

The protein resides in the cytoplasm. It carries out the reaction S-sulfanyl-L-cysteinyl-[protein] + uridine(34) in tRNA + AH2 + ATP = 2-thiouridine(34) in tRNA + L-cysteinyl-[protein] + A + AMP + diphosphate + H(+). Catalyzes the 2-thiolation of uridine at the wobble position (U34) of tRNA, leading to the formation of s(2)U34. The chain is tRNA-specific 2-thiouridylase MnmA from Shewanella baltica (strain OS223).